A 171-amino-acid polypeptide reads, in one-letter code: PRA1-like protein (171 aa).

The next 3 helical transmembrane spans lie at Ala67 to Ile87, Val119 to Ile139, and Trp140 to Val160.

This sequence belongs to the PRA1 family.

It is found in the membrane. The chain is PRA1-like protein from Schizosaccharomyces pombe (strain 972 / ATCC 24843) (Fission yeast).